The primary structure comprises 342 residues: Uroporphyrinogen decarboxylase (342 aa).

Substrate-binding positions include 26–30 (RQAGR), Asp-76, Tyr-150, Ser-205, and His-321.

Belongs to the uroporphyrinogen decarboxylase family. Homodimer.

The protein localises to the cytoplasm. It catalyses the reaction uroporphyrinogen III + 4 H(+) = coproporphyrinogen III + 4 CO2. The protein operates within porphyrin-containing compound metabolism; protoporphyrin-IX biosynthesis; coproporphyrinogen-III from 5-aminolevulinate: step 4/4. Functionally, catalyzes the decarboxylation of four acetate groups of uroporphyrinogen-III to yield coproporphyrinogen-III. The sequence is that of Uroporphyrinogen decarboxylase from Sphingopyxis alaskensis (strain DSM 13593 / LMG 18877 / RB2256) (Sphingomonas alaskensis).